Reading from the N-terminus, the 130-residue chain is Interferon alpha-inducible protein 27-like protein 2 (130 aa).

A run of 3 helical transmembrane segments spans residues 8–28, 43–63, and 66–86; these read AAVG…AMGF, MSAA…VATL, and VGAA…GSVL. Residues 93–130 are disordered; it reads SPSSSLPAEPEAKEDEARENVPQGEPPKPPLKSEKHEE.

Belongs to the IFI6/IFI27 family.

It is found in the mitochondrion membrane. In terms of biological role, plays a role in the apoptotic process and has a pro-apoptotic activity. The protein is Interferon alpha-inducible protein 27-like protein 2 of Homo sapiens (Human).